The primary structure comprises 660 residues: Leucine-rich repeat transmembrane protein FLRT2 (660 aa).

A signal peptide spans 1–35 (MGLQTTKWPGRGAFILKFWLIISLGLYLQVSKLLA). Intrachain disulfides connect Cys-36-Cys-42 and Cys-40-Cys-49. The LRRNT domain occupies 36-63 (CPSVCRCDRNFVYCNERSLTSVPLGIPE). Residues 36–540 (CPSVCRCDRN…QTTSHSMGSP (505 aa)) are Extracellular-facing. LRR repeat units follow at residues 62 to 87 (PEGV…LHNV), 88 to 108 (QSVH…MNLP), 109 to 131 (KNVR…ALAQ), 132 to 157 (LLKL…AFRE), 159 to 181 (ISLK…LPVD), 183 to 202 (QELR…AFQN), 203 to 228 (LTSL…TFSH), 229 to 251 (LTKL…DLPG), 252 to 274 (THLI…AFAN), and 275 to 298 (LRKL…VFDH). Asn-202 is a glycosylation site (N-linked (GlcNAc...) asparagine). Residues 310 to 362 (NPWFCDCSIKWVTEWLKYIPSSLNVRGFMCQGPEQVRGMAVRELNMNLLSCPT) enclose the LRRCT domain. Cystine bridges form between Cys-314–Cys-339 and Cys-316–Cys-360. A compositionally biased stretch (low complexity) spans 371–396 (TPAPSTVSPTTQSPTLSVPSPSRGSV). Positions 371–413 (TPAPSTVSPTTQSPTLSVPSPSRGSVPPAPTPSKLPTIPDWDG) are disordered. The region spanning 419 to 517 (PPISERIQLS…ICSEATTHAS (99 aa)) is the Fibronectin type-III domain. Residues 541-561 (FLLAGLIGGAVIFVLVVLLSV) form a helical membrane-spanning segment. The Cytoplasmic portion of the chain corresponds to 562–660 (FCWHMHKKGR…SVPDLEHCHT (99 aa)).

In terms of assembly, self-associates (via leucine-rich repeats), giving rise to homooligomers. Interacts with FGFR1. Interacts with FGFR2. Interacts (via extracellular domain) with ADGRL1/LPHN1. Interacts (via extracellular domain) with ADGRL3 (via olfactomedin-like domain). Interacts (via extracellular domain) with UNC5D (via the first Ig-like domain). Can also interact (via extracellular domain) with UNC5B, but with much lower affinity. Interacts (via extracellular domain) with FN1. Post-translationally, N-glycosylated. In terms of processing, proteolytic cleavage in the juxtamembrane region gives rise to a soluble ectodomain. Cleavage is probably effected by a metalloprotease. Detected in adult brain (at protein level).

Its subcellular location is the cell membrane. The protein resides in the endoplasmic reticulum membrane. The protein localises to the cell junction. It is found in the focal adhesion. It localises to the secreted. Its subcellular location is the extracellular space. The protein resides in the extracellular matrix. The protein localises to the synapse. It is found in the synaptosome. It localises to the microsome membrane. Functionally, functions in cell-cell adhesion, cell migration and axon guidance. Mediates cell-cell adhesion via its interactions with ADGRL3 and probably also other latrophilins that are expressed at the surface of adjacent cells. May play a role in the migration of cortical neurons during brain development via its interaction with UNC5D. Mediates axon growth cone collapse and plays a repulsive role in neuron guidance via its interaction with UNC5D, and possibly also other UNC-5 family members. Plays a role in fibroblast growth factor-mediated signaling cascades. Required for normal organization of the cardiac basement membrane during embryogenesis, and for normal embryonic epicardium and heart morphogenesis. In Mus musculus (Mouse), this protein is Leucine-rich repeat transmembrane protein FLRT2.